Here is a 1733-residue protein sequence, read N- to C-terminus: Polyketide synthase Pks13 (1733 aa).

A Carrier 1 domain is found at E17–E95. Position 55 is an O-(pantetheine 4'-phosphoryl)serine (S55). Residues R116–E541 form the Ketosynthase family 3 (KS3) domain. C287 (acyl-thioester intermediate; for beta-ketoacyl synthase activity) is an active-site residue. Catalysis depends on for beta-ketoacyl synthase activity residues H423 and H463. A compositionally biased stretch (basic and acidic residues) spans V548–A560. The tract at residues V548 to A567 is disordered. An acyltransferase region spans residues V713–V1034. Catalysis depends on S801, which acts as the Acyl-ester intermediate; for acyltransferase activity. In terms of domain architecture, Carrier 2 spans E1232–R1309. O-(pantetheine 4'-phosphoryl)serine is present on S1266. The segment at P1344–A1368 is disordered. The tract at residues P1470–R1563 is thioesterase-like. Catalysis depends on S1533, which acts as the For thioesterase-like activity.

Post-translationally, 4'-phosphopantetheine is transferred from CoA to specific serines of apo-Pks13 by PptT.

The protein operates within lipid metabolism; mycolic acid biosynthesis. Its activity is regulated as follows. The presence of FadD32 is necessary for the transfer of the acyl chain from the AMP carrier onto Pks13. Its function is as follows. Involved in the biosynthesis of mycolic acids. Forms, with FadD32, the initiation module of the mycolic condensation system. Synthesizes, in coupled reaction with FadD32, the biosynthetic precursors of mycolic acids, alpha-alkyl beta-ketoacids, via the condensation of two long chain fatty acid derivatives, a very long meromycoloyl-AMP and a shorter 2-carboxyacyl-CoA. The acyl chain of the acyl-AMP produced by FadD32 is specifically transferred onto the N-terminal ACP domain of Pks13, and then transferred onto the KS domain. The extender unit carboxyacyl-CoA is specifically loaded onto the AT domain, which catalyzes the covalent attachment of the carboxyacyl chain to its active site, and its subsequent transfer onto the P-pant arm of the C-terminal ACP domain. The KS domain catalyzes the condensation between the two loaded fatty acyl chains to produce an alpha-alkyl beta-ketothioester linked to the C-ACP domain. Then, the thioesterase-like domain acts as a transacylase and is responsible for both the release and the transfer of the alpha-alkyl beta-ketoacyl chain onto a polyol acceptor molecule, particularly trehalose, leading to the formation of the trehalose monomycolate precursor. The protein is Polyketide synthase Pks13 of Mycobacterium tuberculosis (strain ATCC 25618 / H37Rv).